The primary structure comprises 406 residues: Peptidase T (406 aa).

His81 is a Zn(2+) binding site. Asp83 is an active-site residue. Residue Asp142 coordinates Zn(2+). Glu176 functions as the Proton acceptor in the catalytic mechanism. Zn(2+)-binding residues include Glu177, Asp199, and His381.

It belongs to the peptidase M20B family. The cofactor is Zn(2+).

It localises to the cytoplasm. It carries out the reaction Release of the N-terminal residue from a tripeptide.. Cleaves the N-terminal amino acid of tripeptides. This chain is Peptidase T, found in Streptococcus pneumoniae serotype 2 (strain D39 / NCTC 7466).